Reading from the N-terminus, the 163-residue chain is ATP synthase subunit b (163 aa).

The chain crosses the membrane as a helical span at residues 9–29 (GLLIAQLINVVFVVWLLTTFL).

The protein belongs to the ATPase B chain family. In terms of assembly, F-type ATPases have 2 components, F(1) - the catalytic core - and F(0) - the membrane proton channel. F(1) has five subunits: alpha(3), beta(3), gamma(1), delta(1), epsilon(1). F(0) has four main subunits: a(1), b(2) and c(10-14). The alpha and beta chains form an alternating ring which encloses part of the gamma chain. F(1) is attached to F(0) by a central stalk formed by the gamma and epsilon chains, while a peripheral stalk is formed by the delta and b chains.

Its subcellular location is the cell membrane. Its function is as follows. F(1)F(0) ATP synthase produces ATP from ADP in the presence of a proton or sodium gradient. F-type ATPases consist of two structural domains, F(1) containing the extramembraneous catalytic core and F(0) containing the membrane proton channel, linked together by a central stalk and a peripheral stalk. During catalysis, ATP synthesis in the catalytic domain of F(1) is coupled via a rotary mechanism of the central stalk subunits to proton translocation. In terms of biological role, component of the F(0) channel, it forms part of the peripheral stalk, linking F(1) to F(0). This Roseiflexus castenholzii (strain DSM 13941 / HLO8) protein is ATP synthase subunit b.